Reading from the N-terminus, the 662-residue chain is MASPRAVQLSLRKPTHAVCVVGVETLVNVYSDVPKGAKTFGVSGSSEVKIYMVYDPSRVAEPAGWAHWPLDANVDVVVVADTVSKDLYDFKVKVSYFESQEAAALAHSVLYLTAVDVSLDVDTGRTGKVKKGSGDKKTWRWGPGGSGAILLVNCDRDIHGSREDLHANHLKSLEDLQDMSPMVLSCGGPDELFESHKLVLKASLSDSRRLKVFCARGGTSLSNYKQVLGPRHSSYEVERHSGERAIQFYVEGLAFPDASFSGLLSLSVSLVDTRPLSEVSVFTDSVTFRVAPWIMTPNTQPPLELYVCSVTDIHGRNDKFLEDMSHLATKANCKLVVCPRAENRNDRWIQDELEFGYIDAPHKSFPVVFDSPRNRGLRDFALKRILGPDFGYVTREIEFAGASGLDSFGNLDVSPPVRVGNTDYPLGRILIGGSFPKPSGRRMARVVRDFLQAQQVQSPVELYSDWLSVGHVDEFLSFVPTSDQKGFRLLLASPSACLQLFQEKKEEGYGEAEQFDGLKHKAKRSINDILADKHLRRDSAHVQKCIDWNREVLKRELGLSESDIVDIPQLFFLKGAYAEAFFPDMVNMVVLGKYLGIPKPFGPLINGRCCLEEKVRSLLEPLGLRCVFIDDFLFYHQLLGEIHCGTNVRRKPFTFKWWNSVP.

Asn153, Asp155, Asp157, Asp164, Asp175, Asp178, Gln350, Glu352, Lys363, Asp370, Ser371, Asn374, Phe408, and Leu411 together coordinate Ca(2+). The Nucleophile role is filled by Cys644.

This sequence belongs to the protein arginine deiminase family. As to quaternary structure, monomer. Ca(2+) serves as cofactor. As to expression, expressed only in the epidermis and uterus.

The protein resides in the cytoplasm. It catalyses the reaction L-arginyl-[protein] + H2O = L-citrullyl-[protein] + NH4(+). Functionally, catalyzes the deimination of arginine residues of proteins. This Mus musculus (Mouse) protein is Protein-arginine deiminase type-1 (Padi1).